We begin with the raw amino-acid sequence, 137 residues long: Large ribosomal subunit protein uL16 (137 aa).

Belongs to the universal ribosomal protein uL16 family. Part of the 50S ribosomal subunit.

Functionally, binds 23S rRNA and is also seen to make contacts with the A and possibly P site tRNAs. The protein is Large ribosomal subunit protein uL16 of Agrobacterium fabrum (strain C58 / ATCC 33970) (Agrobacterium tumefaciens (strain C58)).